Reading from the N-terminus, the 149-residue chain is Glutamyl-tRNA(Gln) amidotransferase subunit C, mitochondrial (149 aa).

The transit peptide at Met-1 to Leu-25 directs the protein to the mitochondrion.

This sequence belongs to the GatC family. In terms of assembly, subunit of the heterotrimeric GatCAB amidotransferase (AdT) complex, composed of A, B and C subunits.

It localises to the mitochondrion. It carries out the reaction L-glutamyl-tRNA(Gln) + L-glutamine + ATP + H2O = L-glutaminyl-tRNA(Gln) + L-glutamate + ADP + phosphate + H(+). In terms of biological role, allows the formation of correctly charged Gln-tRNA(Gln) through the transamidation of misacylated Glu-tRNA(Gln) in the mitochondria. The reaction takes place in the presence of glutamine and ATP through an activated gamma-phospho-Glu-tRNA(Gln). The protein is Glutamyl-tRNA(Gln) amidotransferase subunit C, mitochondrial of Branchiostoma floridae (Florida lancelet).